The primary structure comprises 290 residues: Diaminopimelate epimerase (290 aa).

Asn-17, Gln-49, and Asn-69 together coordinate substrate. The active-site Proton donor is Cys-78. Residues Gly-79 to Asn-80, Asn-166, Asn-199, and Glu-217 to Arg-218 each bind substrate. Residue Cys-226 is the Proton acceptor of the active site. Gly-227–Ser-228 provides a ligand contact to substrate.

This sequence belongs to the diaminopimelate epimerase family. In terms of assembly, homodimer.

It is found in the cytoplasm. The enzyme catalyses (2S,6S)-2,6-diaminopimelate = meso-2,6-diaminopimelate. It functions in the pathway amino-acid biosynthesis; L-lysine biosynthesis via DAP pathway; DL-2,6-diaminopimelate from LL-2,6-diaminopimelate: step 1/1. Functionally, catalyzes the stereoinversion of LL-2,6-diaminopimelate (L,L-DAP) to meso-diaminopimelate (meso-DAP), a precursor of L-lysine and an essential component of the bacterial peptidoglycan. The sequence is that of Diaminopimelate epimerase from Afipia carboxidovorans (strain ATCC 49405 / DSM 1227 / KCTC 32145 / OM5) (Oligotropha carboxidovorans).